The chain runs to 341 residues: Ferredoxin--NADP reductase (341 aa).

FAD-binding residues include Glu36, Gln44, Phe49, Val89, Phe123, Asp289, and Thr329.

Belongs to the ferredoxin--NADP reductase type 2 family. Homodimer. FAD is required as a cofactor.

It catalyses the reaction 2 reduced [2Fe-2S]-[ferredoxin] + NADP(+) + H(+) = 2 oxidized [2Fe-2S]-[ferredoxin] + NADPH. The chain is Ferredoxin--NADP reductase from Ligilactobacillus salivarius (strain UCC118) (Lactobacillus salivarius).